Reading from the N-terminus, the 196-residue chain is SPRY domain-containing protein 7 (196 aa).

Residue alanine 2 is modified to N-acetylalanine. The B30.2/SPRY domain maps to 2–184; sequence AASVFCCLRC…FSEFYHTPPP (183 aa).

This is SPRY domain-containing protein 7 (SPRYD7) from Bos taurus (Bovine).